A 434-amino-acid chain; its full sequence is D-amino acid dehydrogenase (434 aa).

Residue 3-17 participates in FAD binding; that stretch reads VIVLGSGVIGTTTAY.

This sequence belongs to the DadA oxidoreductase family. Requires FAD as cofactor.

It carries out the reaction a D-alpha-amino acid + A + H2O = a 2-oxocarboxylate + AH2 + NH4(+). It functions in the pathway amino-acid degradation; D-alanine degradation; NH(3) and pyruvate from D-alanine: step 1/1. In terms of biological role, oxidative deamination of D-amino acids. This chain is D-amino acid dehydrogenase, found in Bordetella petrii (strain ATCC BAA-461 / DSM 12804 / CCUG 43448).